A 1161-amino-acid chain; its full sequence is Integrin alpha-D (1161 aa).

The signal sequence occupies residues 1–17 (MTFGTVLLLSVLASYHG). Topologically, residues 18–1099 (FNLDVEEPTI…MVLEEDEVYN (1082 aa)) are extracellular. 2 FG-GAP repeats span residues 19–76 (NLDV…MCQP) and 77–136 (IPLH…IIQT). Asn59 carries N-linked (GlcNAc...) asparagine glycosylation. A disulfide bond links Cys67 and Cys74. N-linked (GlcNAc...) asparagine glycans are attached at residues Asn87 and Asn99. Cysteines 106 and 124 form a disulfide. The VWFA domain maps to 150–332 (DIVFLIDGSG…SIQKQLQEKI (183 aa)). FG-GAP repeat units lie at residues 339–390 (QSRA…PTFI), 391–442 (NMSQ…SRQW), 443–503 (RKKA…RVQW), 506–564 (DAVL…SGIS), and 569–629 (QRIA…FSPV). N-linked (GlcNAc...) asparagine glycosylation occurs at Asn391. Ca(2+)-binding residues include Asp465, Asp467, Asp469, Asp473, Asp529, Asn531, Asp533, Asp537, Asp592, Asp596, and Asp600. An intrachain disulfide couples Cys654 to Cys709. N-linked (GlcNAc...) asparagine glycans are attached at residues Asn690 and Asn732. Intrachain disulfides connect Cys768/Cys774 and Cys845/Cys860. 2 N-linked (GlcNAc...) asparagine glycosylation sites follow: Asn872 and Asn956. 2 disulfide bridges follow: Cys993-Cys1017 and Cys1022-Cys1027. The N-linked (GlcNAc...) asparagine glycan is linked to Asn1045. The helical transmembrane segment at 1100-1120 (AIPIIMGSSVGALLLLALITA) threads the bilayer. Residues 1121 to 1161 (TLYKLGFFKRHYKEMLEDKPEDTATFSGDDFSCVAPNVPLS) are Cytoplasmic-facing. The GFFKR motif signature appears at 1126-1130 (GFFKR).

The protein belongs to the integrin alpha chain family. Heterodimer of an alpha and a beta subunit. Alpha-D associates with beta-2. As to expression, expressed moderately on myelomonocytic cell lines and subsets of peripheral blood leukocytes and strongly on tissue-specialized cells, including macrophages foam cells within atherosclerotic plaques, and on splenic red pulp macrophages.

It is found in the membrane. Functionally, integrin alpha-D/beta-2 is a receptor for ICAM3 and VCAM1. May play a role in the atherosclerotic process such as clearing lipoproteins from plaques and in phagocytosis of blood-borne pathogens, particulate matter, and senescent erythrocytes from the blood. The polypeptide is Integrin alpha-D (ITGAD) (Homo sapiens (Human)).